The sequence spans 176 residues: Ribosome maturation factor RimM (176 aa).

A PRC barrel domain is found at 96 to 176; sequence PEDEFYWRDL…QILVDWDPDF (81 aa).

The protein belongs to the RimM family. In terms of assembly, binds ribosomal protein uS19.

It localises to the cytoplasm. Functionally, an accessory protein needed during the final step in the assembly of 30S ribosomal subunit, possibly for assembly of the head region. Essential for efficient processing of 16S rRNA. May be needed both before and after RbfA during the maturation of 16S rRNA. It has affinity for free ribosomal 30S subunits but not for 70S ribosomes. The polypeptide is Ribosome maturation factor RimM (Shewanella piezotolerans (strain WP3 / JCM 13877)).